Here is a 311-residue protein sequence, read N- to C-terminus: CAAX prenyl protease 2 (311 aa).

Transmembrane regions (helical) follow at residues 14-34, 51-71, and 94-114; these read VATC…PTVI, FICA…ILPI, and VVYP…LKLF. The active-site Proton donor/acceptor is the Glu-164. Residues 173–193 traverse the membrane as a helical segment; the sequence is IPLLLCAGFRINTAIFLCPVL. His-198 (proton donor/acceptor) is an active-site residue. 3 consecutive transmembrane segments (helical) span residues 219 to 239, 244 to 264, and 268 to 288; these read IVGL…FLFI, LAAP…VLYA, and GLVS…LFPL.

Belongs to the peptidase U48 family. In terms of tissue distribution, expressed in seeds, stems, leaves, flowers and siliques.

It is found in the endoplasmic reticulum membrane. It carries out the reaction Hydrolyzes the peptide bond -P2-(S-farnesyl or geranylgeranyl)C-P1'-P2'-P3'-COOH where P1' and P2' are amino acids with aliphatic sidechains and P3' is any C-terminal residue.. Inhibited in vitro by L-1-tosylamido-2-phenylethyl chloromethyl ketone (TPCK) and N-ethylmaleimide, but not by EDTA. Functionally, protease involved in the processing of a variety of prenylated proteins containing the C-terminal CAAX motif, where C is a cysteine modified with an isoprenoid lipid, A is an aliphatic amino acid and X is any C-terminal amino acid. Proteolytically removes the C-terminal three residues of farnesylated and geranylated proteins, leaving the prenylated cysteine as the new C-terminus. The substrate specificity is only partially overlapping with that of FACE1. CAAX processing is likely required for subcellular targeting of prenylated proteins to the plasma membrane. The sequence is that of CAAX prenyl protease 2 (FACE2) from Arabidopsis thaliana (Mouse-ear cress).